Consider the following 193-residue polypeptide: ATP-dependent Clp protease proteolytic subunit 2 (193 aa).

Catalysis depends on Ser-98, which acts as the Nucleophile. Residue His-123 is part of the active site.

This sequence belongs to the peptidase S14 family. As to quaternary structure, fourteen ClpP subunits assemble into 2 heptameric rings which stack back to back to give a disk-like structure with a central cavity, resembling the structure of eukaryotic proteasomes.

It localises to the cytoplasm. It carries out the reaction Hydrolysis of proteins to small peptides in the presence of ATP and magnesium. alpha-casein is the usual test substrate. In the absence of ATP, only oligopeptides shorter than five residues are hydrolyzed (such as succinyl-Leu-Tyr-|-NHMec, and Leu-Tyr-Leu-|-Tyr-Trp, in which cleavage of the -Tyr-|-Leu- and -Tyr-|-Trp bonds also occurs).. Its function is as follows. Cleaves peptides in various proteins in a process that requires ATP hydrolysis. Has a chymotrypsin-like activity. Plays a major role in the degradation of misfolded proteins. This is ATP-dependent Clp protease proteolytic subunit 2 from Bacillus cereus (strain ATCC 10987 / NRS 248).